The following is a 327-amino-acid chain: Vacuolar protein sorting-associated protein 26A (327 aa).

Positions 306-327 (RTNFHQRFESPDSQASAEQPEM) are disordered. A Phosphoserine modification is found at Ser-315. Over residues 316–327 (PDSQASAEQPEM) the composition is skewed to polar residues.

This sequence belongs to the VPS26 family. In terms of assembly, component of the heterotrimeric retromer cargo-selective complex (CSC), also described as vacuolar protein sorting subcomplex (VPS), formed by VPS26 (VPS26A or VPS26B), VPS29 and VPS35. The CSC has a highly elongated structure with VPS26 and VPS29 binding independently at opposite distal ends of VPS35 as central platform. The CSC is believed to associate with variable sorting nexins to form functionally distinct retromer complex variants. The originally described retromer complex (also called SNX-BAR retromer) is a pentamer containing the CSC and a heterodimeric membrane-deforming subcomplex formed between SNX1 or SNX2 and SNX5 or SNX6 (also called SNX-BAR subcomplex); the respective CSC and SNX-BAR subcomplexes associate with low affinity. The CSC associates with SNX3 to form a SNX3-retromer complex. The CSC associates with SNX27, the WASH complex and the SNX-BAR subcomplex to form the SNX27-retromer complex. Interacts with VPS29, VPS35, SNX27. Interacts with SNX1, SNX2, SNX5, SNX6, SNX3, RAB7A, ECPAS, EHD1, WASHC5, SORL1.

The protein localises to the cytoplasm. It is found in the endosome membrane. It localises to the early endosome. Acts as a component of the retromer cargo-selective complex (CSC). The CSC is believed to be the core functional component of retromer or respective retromer complex variants acting to prevent missorting of selected transmembrane cargo proteins into the lysosomal degradation pathway. The recruitment of the CSC to the endosomal membrane involves RAB7A and SNX3. The SNX-BAR retromer mediates retrograde transport of cargo proteins from endosomes to the trans-Golgi network (TGN) and is involved in endosome-to-plasma membrane transport for cargo protein recycling. The SNX3-retromer mediates the retrograde endosome-to-TGN transport of WLS distinct from the SNX-BAR retromer pathway. The SNX27-retromer is believed to be involved in endosome-to-plasma membrane trafficking and recycling of a broad spectrum of cargo proteins. The CSC complex seems to act as recruitment hub for other proteins, such as the WASH complex and TBC1D5. Required for retrograde transport of lysosomal enzyme receptor IGF2R. Required to regulate transcytosis of the polymeric immunoglobulin receptor (pIgR-pIgA). Required for the endosomal localization of WASHC2 (indicative for the WASH complex). Required for the endosomal localization of TBC1D5. Mediates retromer cargo recognition of SORL1 and is involved in trafficking of SORL1 implicated in sorting and processing of APP. Involved in retromer-independent lysosomal sorting of F2R. Involved in recycling of ADRB2. Acts redundantly with VSP26B in SNX-27 mediated endocytic recycling of SLC2A1/GLUT1. Enhances the affinity of SNX27 for PDZ-binding motifs in cargo proteins. This is Vacuolar protein sorting-associated protein 26A (Vps26a) from Mus musculus (Mouse).